The sequence spans 375 residues: Tyrosine--tRNA ligase (375 aa).

The L-tyrosine site is built by Tyr-37, Tyr-168, Gln-172, Asp-175, and Gln-190. Positions 251–255 (KMSKS) match the 'KMSKS' region motif. An ATP-binding site is contributed by Lys-254.

This sequence belongs to the class-I aminoacyl-tRNA synthetase family. TyrS type 4 subfamily. As to quaternary structure, homodimer.

It localises to the cytoplasm. The enzyme catalyses tRNA(Tyr) + L-tyrosine + ATP = L-tyrosyl-tRNA(Tyr) + AMP + diphosphate + H(+). Functionally, catalyzes the attachment of tyrosine to tRNA(Tyr) in a two-step reaction: tyrosine is first activated by ATP to form Tyr-AMP and then transferred to the acceptor end of tRNA(Tyr). In Pyrococcus furiosus (strain ATCC 43587 / DSM 3638 / JCM 8422 / Vc1), this protein is Tyrosine--tRNA ligase.